The sequence spans 439 residues: MKFRALGLVLLLAVETCKAEEITCEETKPFTCNQTDRFNRKHFDDDFIFEGGKGRGLNVWDGFTHRYPEKGGPDLGNGDSTCGSYEHWQKDIDVMTELGVDGYRFSLAWSRIAPRESNQAGVKYYNDLIDGLLAKNITPFVTLFHWDLPQVLQDEYEGFLNHEIIDDFKDYANLCFKIFGDRVKKWITINQLYTVPTRGYAMGTDAPEPYIVAHNQLLAHAKVVHLYRKKYKPKQRGQIGVVMITRWFVPYDSTQANIDATERNKEFFLGWFMEPLTKGKYPDIMRKLVGRRLPKFNKKEAKLVKGSYDFLGINYYQTQYVYAIPANPPNRLTVLNDSLSAFSYENKDGPIGPWFNADSYYHPRGILNVLEHFKTKYGNPLVYITENGELLILSGCNVKGYFAWCLGDNYELWPSRSFHVSPFYLLHRKDKGAFPSFEA.

The signal sequence occupies residues 1–19 (MKFRALGLVLLLAVETCKA). N-linked (GlcNAc...) asparagine glycosylation is present at N33. Residues H145, 190-191 (NQ), and Y316 each bind a beta-D-glucoside. A glycan (N-linked (GlcNAc...) asparagine) is linked at N336. 2 residues coordinate a beta-D-glucoside: E386 and W404. E386 serves as the catalytic Nucleophile.

Belongs to the glycosyl hydrolase 1 family. As to expression, expressed specifically in stamens and petals.

It carries out the reaction a thioglucoside + H2O = a sugar + a thiol.. The polypeptide is Putative myrosinase 3 (Arabidopsis thaliana (Mouse-ear cress)).